The primary structure comprises 371 residues: MSTNNSDIRVVVGMSGGVDSSVTAHILKEQGYDVIGIFMKNWDDTDEFGVCTATEDYDDVIRVANQIGIPYYAVNFEKEYWDKVFTYFLDEYKLGRTPNPDVMCNKEIKFKAFLEHAESLGADYVATGHYAQVKKVGDEIELLRGVDNNKDQTYFLNQLSQDQLKKVMFPLGGMEKTEVREIATKAGLATANKKDSTGICFIGERNFKQFLSEYLPAQPGDMRTLNGEVLGKHDGLMYYTIGQRHGLGIGGDGEPWFVVGKDLKNNVLFVEQGFHHDSLYSDSLIATDISFTTNSEKPKTFVCTAKFRYRQTDTKVTVNMREDGTAEVVFADPVRAITPGQAVVFYDGDICLGGGTIDTVWKKGAKLNYVG.

Residues G13–S20 and M39 contribute to the ATP site. An interaction with target base in tRNA region spans residues N99 to D101. The Nucleophile role is filled by C104. The cysteines at positions 104 and 200 are disulfide-linked. Residue G128 coordinates ATP. The tract at residues K150 to Q152 is interaction with tRNA. C200 (cysteine persulfide intermediate) is an active-site residue. An interaction with tRNA region spans residues R308–Y309.

It belongs to the MnmA/TRMU family.

The protein localises to the cytoplasm. It catalyses the reaction S-sulfanyl-L-cysteinyl-[protein] + uridine(34) in tRNA + AH2 + ATP = 2-thiouridine(34) in tRNA + L-cysteinyl-[protein] + A + AMP + diphosphate + H(+). Functionally, catalyzes the 2-thiolation of uridine at the wobble position (U34) of tRNA, leading to the formation of s(2)U34. This Listeria innocua serovar 6a (strain ATCC BAA-680 / CLIP 11262) protein is tRNA-specific 2-thiouridylase MnmA.